We begin with the raw amino-acid sequence, 338 residues long: Pyridoxal 5'-phosphate synthase subunit PdxS (338 aa).

Asp-66 is a D-ribose 5-phosphate binding site. Lys-123 (schiff-base intermediate with D-ribose 5-phosphate) is an active-site residue. A D-ribose 5-phosphate-binding site is contributed by Gly-195. Lys-207 is a D-glyceraldehyde 3-phosphate binding site. Residues Gly-256 and 277 to 278 (GS) contribute to the D-ribose 5-phosphate site.

Belongs to the PdxS/SNZ family. As to quaternary structure, in the presence of PdxT, forms a dodecamer of heterodimers.

It catalyses the reaction aldehydo-D-ribose 5-phosphate + D-glyceraldehyde 3-phosphate + L-glutamine = pyridoxal 5'-phosphate + L-glutamate + phosphate + 3 H2O + H(+). It participates in cofactor biosynthesis; pyridoxal 5'-phosphate biosynthesis. Catalyzes the formation of pyridoxal 5'-phosphate from ribose 5-phosphate (RBP), glyceraldehyde 3-phosphate (G3P) and ammonia. The ammonia is provided by the PdxT subunit. Can also use ribulose 5-phosphate and dihydroxyacetone phosphate as substrates, resulting from enzyme-catalyzed isomerization of RBP and G3P, respectively. This is Pyridoxal 5'-phosphate synthase subunit PdxS from Saccharolobus islandicus (strain L.S.2.15 / Lassen #1) (Sulfolobus islandicus).